We begin with the raw amino-acid sequence, 502 residues long: 4-hydroxy-3-methylbut-2-enyl diphosphate reductase, chloroplastic (502 aa).

The N-terminal 48 residues, 1-48 (MQVLPQTRVQGVPSGRNLSCSKAVGGTPLRALTRDVVRPARSVNVHVV), are a transit peptide targeting the chloroplast. C140 contacts [4Fe-4S] cluster. (2E)-4-hydroxy-3-methylbut-2-enyl diphosphate is bound at residue H170. C232 lines the [4Fe-4S] cluster pocket. A (2E)-4-hydroxy-3-methylbut-2-enyl diphosphate-binding site is contributed by H260. The Proton donor role is filled by E262. Residue T325 coordinates (2E)-4-hydroxy-3-methylbut-2-enyl diphosphate. C363 contributes to the [4Fe-4S] cluster binding site. (2E)-4-hydroxy-3-methylbut-2-enyl diphosphate is bound by residues 398–400 (SSN) and S461.

The protein belongs to the IspH family. As to quaternary structure, homodimer. [4Fe-4S] cluster serves as cofactor.

The protein localises to the plastid. It is found in the chloroplast stroma. It carries out the reaction dimethylallyl diphosphate + 2 oxidized [2Fe-2S]-[ferredoxin] + H2O = (2E)-4-hydroxy-3-methylbut-2-enyl diphosphate + 2 reduced [2Fe-2S]-[ferredoxin] + 2 H(+). The enzyme catalyses isopentenyl diphosphate + 2 oxidized [2Fe-2S]-[ferredoxin] + H2O = (2E)-4-hydroxy-3-methylbut-2-enyl diphosphate + 2 reduced [2Fe-2S]-[ferredoxin] + 2 H(+). It participates in isoprenoid biosynthesis; dimethylallyl diphosphate biosynthesis; dimethylallyl diphosphate from (2E)-4-hydroxy-3-methylbutenyl diphosphate: step 1/1. Its pathway is isoprenoid biosynthesis; isopentenyl diphosphate biosynthesis via DXP pathway; isopentenyl diphosphate from 1-deoxy-D-xylulose 5-phosphate: step 6/6. Enzyme of the plastid non-mevalonate pathway for isoprenoid biosynthesis that converts 1-hydroxy-2-methyl-2-(E)-butenyl 4-diphosphate into isopentenyl diphosphate (IPP) and dimethylallyl diphosphate (DMAPP). This is 4-hydroxy-3-methylbut-2-enyl diphosphate reductase, chloroplastic from Botryococcus braunii (Green alga).